A 413-amino-acid chain; its full sequence is Azaphilone biosynthesis cluster protein M (413 aa).

Positions 123 to 138 (STQPDQVQPNQPTPSF) are enriched in polar residues. The interval 123-145 (STQPDQVQPNQPTPSFESAAGAS) is disordered.

The protein operates within secondary metabolite biosynthesis. Its function is as follows. Part of the gene cluster that mediates the biosynthesis of azaterrilone A and other azaphilones, a class of fungal metabolites characterized by a highly oxygenated pyrano-quinone bicyclic core and exhibiting a broad range of bioactivities. The first step of the pathway begins with the non-reducing polyketide synthase tazA that assembles one acetyl-CoA starter unit, five malonyl-CoA units, and catalyzes a series of Claisen condensations, methylation, PT-mediated cyclization, and finally releases the first hexaketide precursor through the R-domain. The tazA product then undergoes reduction on its terminal ketone and the following pyran-ring formation by yet undetermined enzyme(s). Dehydration and enoyl reduction, possibly involving the trans-enoyl reductase tazE leads to the next intermediate. TazD is predicted as an acetyltransferase and might catalyze the acetylation steps leading to the synthesis of azaterrilone A. Azaterrilone A is not the final product of the taz pathway and both the highly reducing polyketide synthase tazB and the dual enzyme tazHJ catalyze late steps of the pathway, leading to the production of the 2 final stereoisomers that contain additional polyketide modification whose structures have still to be determined. The protein is Azaphilone biosynthesis cluster protein M of Aspergillus terreus (strain NIH 2624 / FGSC A1156).